A 150-amino-acid chain; its full sequence is MRKIVAGKLHGLTVTGADLNYHGSITLDPEHCEEAGILPLEFVEIWNRNSGARISTYVILGERGSRCCVLNGAAARTCQPGDEVIICNSVYVPEGEIVALRPRVLTFDKDNRVTSRLTYEVTRDSQGAYHFAVRDERGDEKPIPLRVEAS.

Catalysis depends on serine 24, which acts as the Schiff-base intermediate with substrate; via pyruvic acid. The residue at position 24 (serine 24) is a Pyruvic acid (Ser). Threonine 56 contacts substrate. The active-site Proton donor is the tyrosine 57. Substrate is bound at residue 72–74 (GAA).

The protein belongs to the PanD family. In terms of assembly, heterooctamer of four alpha and four beta subunits. Pyruvate serves as cofactor. In terms of processing, is synthesized initially as an inactive proenzyme, which is activated by self-cleavage at a specific serine bond to produce a beta-subunit with a hydroxyl group at its C-terminus and an alpha-subunit with a pyruvoyl group at its N-terminus.

The protein resides in the cytoplasm. It carries out the reaction L-aspartate + H(+) = beta-alanine + CO2. It functions in the pathway cofactor biosynthesis; (R)-pantothenate biosynthesis; beta-alanine from L-aspartate: step 1/1. Its function is as follows. Catalyzes the pyruvoyl-dependent decarboxylation of aspartate to produce beta-alanine. The sequence is that of Aspartate 1-decarboxylase from Xanthobacter autotrophicus (strain ATCC BAA-1158 / Py2).